The chain runs to 127 residues: Cytochrome b-c1 complex subunit 7, mitochondrial (127 aa).

The protein belongs to the UQCRB/QCR7 family. As to quaternary structure, component of the ubiquinol-cytochrome c oxidoreductase (cytochrome b-c1 complex, complex III, CIII), a multisubunit enzyme composed of 10 subunits. The complex is composed of 3 respiratory subunits cytochrome b (COB), cytochrome c1 (CYT1) and Rieske protein (RIP1), 2 core protein subunits COR1 and QCR2, and 5 low-molecular weight protein subunits QCR6, QCR7, QCR8, QCR9 and QCR10. The complex exists as an obligatory dimer and forms supercomplexes (SCs) in the inner mitochondrial membrane with a monomer or a dimer of cytochrome c oxidase (complex IV, CIV), resulting in 2 different assemblies (supercomplexes III(2)IV and III(2)IV(2)).

Its subcellular location is the mitochondrion inner membrane. Its function is as follows. Component of the ubiquinol-cytochrome c oxidoreductase, a multisubunit transmembrane complex that is part of the mitochondrial electron transport chain which drives oxidative phosphorylation. Plays an important role in the uptake of multiple carbon sources such acetate, lactate, amino acids or GlcNAc present in different host niches. This chain is Cytochrome b-c1 complex subunit 7, mitochondrial, found in Candida albicans (strain SC5314 / ATCC MYA-2876) (Yeast).